Reading from the N-terminus, the 305-residue chain is UDP-3-O-acyl-N-acetylglucosamine deacetylase (305 aa).

Residues H78, H237, and D241 each coordinate Zn(2+). H264 (proton donor) is an active-site residue.

Belongs to the LpxC family. Zn(2+) is required as a cofactor.

It carries out the reaction a UDP-3-O-[(3R)-3-hydroxyacyl]-N-acetyl-alpha-D-glucosamine + H2O = a UDP-3-O-[(3R)-3-hydroxyacyl]-alpha-D-glucosamine + acetate. The protein operates within glycolipid biosynthesis; lipid IV(A) biosynthesis; lipid IV(A) from (3R)-3-hydroxytetradecanoyl-[acyl-carrier-protein] and UDP-N-acetyl-alpha-D-glucosamine: step 2/6. Functionally, catalyzes the hydrolysis of UDP-3-O-myristoyl-N-acetylglucosamine to form UDP-3-O-myristoylglucosamine and acetate, the committed step in lipid A biosynthesis. In Paraburkholderia phymatum (strain DSM 17167 / CIP 108236 / LMG 21445 / STM815) (Burkholderia phymatum), this protein is UDP-3-O-acyl-N-acetylglucosamine deacetylase.